The following is a 357-amino-acid chain: Alanine racemase, catabolic (357 aa).

Residue Lys-33 is the Proton acceptor; specific for D-alanine of the active site. Position 33 is an N6-(pyridoxal phosphate)lysine (Lys-33). Residue Lys-122 is modified to N6-carboxylysine. Arg-129 lines the substrate pocket. Residue Tyr-253 is the Proton acceptor; specific for L-alanine of the active site. Substrate is bound at residue Met-301.

It belongs to the alanine racemase family. In terms of assembly, homodimer. Requires pyridoxal 5'-phosphate as cofactor.

The enzyme catalyses L-alanine = D-alanine. Its function is as follows. Isomerizes L-alanine to D-alanine which is then oxidized to pyruvate by DadA. This chain is Alanine racemase, catabolic, found in Pseudomonas aeruginosa (strain ATCC 15692 / DSM 22644 / CIP 104116 / JCM 14847 / LMG 12228 / 1C / PRS 101 / PAO1).